A 206-amino-acid chain; its full sequence is Cytochrome c oxidase assembly protein CtaG (206 aa).

Residues Met1 to Arg12 are Cytoplasmic-facing. A helical; Signal-anchor for type II membrane protein transmembrane segment spans residues Ile13–Leu35. At Tyr36–Gly206 the chain is on the periplasmic side. The disordered stretch occupies residues Val184–Gly206. The segment covering Glu188–Gly206 has biased composition (polar residues).

It belongs to the COX11/CtaG family.

Its subcellular location is the cell inner membrane. Functionally, exerts its effect at some terminal stage of cytochrome c oxidase synthesis, probably by being involved in the insertion of the copper B into subunit I. This is Cytochrome c oxidase assembly protein CtaG from Mesorhizobium japonicum (strain LMG 29417 / CECT 9101 / MAFF 303099) (Mesorhizobium loti (strain MAFF 303099)).